Here is a 526-residue protein sequence, read N- to C-terminus: Transcription factor MYC1 (526 aa).

Positions 330–351 (MFPSQNSGLNQDDPSDRRKENE) are disordered. A compositionally biased stretch (polar residues) spans 332-341 (PSQNSGLNQD). Positions 333–382 (SQNSGLNQDDPSDRRKENEKFSVLRTMVPTVNEVDKESILNNTIKYLQEL) constitute a bHLH domain.

Homodimer. Interacts with MYB75/PAP1, MYB90/PAP2, MYB4, MYB5, MYB6, MYB23, MYB82, MYB113, MYB114, TT2, MYB0/GL1, and MYB66/WER. In terms of tissue distribution, mostly expressed in developing seeds. Also detected in stems and leaves.

It localises to the nucleus. Its function is as follows. Trancsription activator, when associated with MYB75/PAP1 or MYB90/PAP2. The polypeptide is Transcription factor MYC1 (BHLH12) (Arabidopsis thaliana (Mouse-ear cress)).